A 352-amino-acid chain; its full sequence is Cell division protein ZipA (352 aa).

The Periplasmic segment spans residues 1 to 6 (MKDLQL). A helical transmembrane segment spans residues 7–27 (VLFVLGAIAIIAVLVHGFWSI). At 28–352 (RKQQPKSMKQ…KDYLRRLNAA (325 aa)) the chain is on the cytoplasmic side. 2 disordered regions span residues 78–120 (KPVL…HVEP) and 138–160 (PAPT…TSTA). A compositionally biased stretch (polar residues) spans 83–105 (TNLSQKPHSGTTKLTDTPLQDSL). The span at 111–120 (HKTEPEHVEP) shows a compositional bias: basic and acidic residues. Over residues 141–160 (TASTSMNTPKKIFNPSTSTA) the composition is skewed to polar residues.

It belongs to the ZipA family. Interacts with FtsZ via their C-terminal domains.

Its subcellular location is the cell inner membrane. Essential cell division protein that stabilizes the FtsZ protofilaments by cross-linking them and that serves as a cytoplasmic membrane anchor for the Z ring. Also required for the recruitment to the septal ring of downstream cell division proteins. This is Cell division protein ZipA from Shewanella frigidimarina (strain NCIMB 400).